Reading from the N-terminus, the 259-residue chain is Zinc import ATP-binding protein ZnuC (259 aa).

The ABC transporter domain maps to 22–238 (VEARGLTVRR…PEYRALFGAH (217 aa)). Position 54–61 (54–61 (GPNGSGKS)) interacts with ATP.

The protein belongs to the ABC transporter superfamily. Zinc importer (TC 3.A.1.15.5) family. In terms of assembly, the complex is composed of two ATP-binding proteins (ZnuC), two transmembrane proteins (ZnuB) and a solute-binding protein (ZnuA).

It localises to the cell inner membrane. It catalyses the reaction Zn(2+)(out) + ATP(in) + H2O(in) = Zn(2+)(in) + ADP(in) + phosphate(in) + H(+)(in). Functionally, part of the ABC transporter complex ZnuABC involved in zinc import. Responsible for energy coupling to the transport system. This Alkalilimnicola ehrlichii (strain ATCC BAA-1101 / DSM 17681 / MLHE-1) protein is Zinc import ATP-binding protein ZnuC.